Reading from the N-terminus, the 478-residue chain is Cytochrome c-552 (478 aa).

A signal peptide spans 1 to 27 (MKKQWTRRSAAAIAMVTTLLLSSHSFA). Residue H91 coordinates heme c. The heme site is built by C119, C122, and K123. Positions 157, 160, 161, 206, 209, and 210 each coordinate heme c. Residues E212, Y213, K258, and Q260 each contribute to the Ca(2+) site. Residue Y213 participates in substrate binding. H261 is a binding site for substrate. Heme c-binding residues include H272, C279, C282, H283, H298, C311, C314, H315, and H390.

This sequence belongs to the cytochrome c-552 family. Ca(2+) serves as cofactor. Heme c is required as a cofactor.

The protein localises to the periplasm. The catalysed reaction is 6 Fe(III)-[cytochrome c] + NH4(+) + 2 H2O = 6 Fe(II)-[cytochrome c] + nitrite + 8 H(+). Its pathway is nitrogen metabolism; nitrate reduction (assimilation). Catalyzes the reduction of nitrite to ammonia, consuming six electrons in the process. The polypeptide is Cytochrome c-552 (Aliivibrio salmonicida (strain LFI1238) (Vibrio salmonicida (strain LFI1238))).